A 209-amino-acid polypeptide reads, in one-letter code: Ribonuclease HII (209 aa).

Residues 19 to 209 (CTIVGVDEVG…ASGITKLYNK (191 aa)) enclose the RNase H type-2 domain. 3 residues coordinate a divalent metal cation: aspartate 25, glutamate 26, and aspartate 118.

The protein belongs to the RNase HII family. It depends on Mn(2+) as a cofactor. Mg(2+) is required as a cofactor.

It localises to the cytoplasm. The catalysed reaction is Endonucleolytic cleavage to 5'-phosphomonoester.. Endonuclease that specifically degrades the RNA of RNA-DNA hybrids. This chain is Ribonuclease HII, found in Ehrlichia chaffeensis (strain ATCC CRL-10679 / Arkansas).